A 361-amino-acid chain; its full sequence is S-adenosylmethionine decarboxylase proenzyme (361 aa).

Active-site residues include glutamate 11 and glutamate 14. Serine 71 (schiff-base intermediate with substrate; via pyruvic acid) is an active-site residue. Serine 71 is subject to Pyruvic acid (Ser); by autocatalysis. Residue cysteine 85 is the Proton donor; for catalytic activity of the active site. Active-site proton acceptor; for processing activity residues include serine 234 and histidine 247.

The protein belongs to the eukaryotic AdoMetDC family. Pyruvate serves as cofactor. Is synthesized initially as an inactive proenzyme. Formation of the active enzyme involves a self-maturation process in which the active site pyruvoyl group is generated from an internal serine residue via an autocatalytic post-translational modification. Two non-identical subunits are generated from the proenzyme in this reaction, and the pyruvate is formed at the N-terminus of the alpha chain, which is derived from the carboxyl end of the proenzyme. The post-translation cleavage follows an unusual pathway, termed non-hydrolytic serinolysis, in which the side chain hydroxyl group of the serine supplies its oxygen atom to form the C-terminus of the beta chain, while the remainder of the serine residue undergoes an oxidative deamination to produce ammonia and the pyruvoyl group blocking the N-terminus of the alpha chain.

The enzyme catalyses S-adenosyl-L-methionine + H(+) = S-adenosyl 3-(methylsulfanyl)propylamine + CO2. It functions in the pathway amine and polyamine biosynthesis; S-adenosylmethioninamine biosynthesis; S-adenosylmethioninamine from S-adenosyl-L-methionine: step 1/1. In Daucus carota (Wild carrot), this protein is S-adenosylmethionine decarboxylase proenzyme (SAMDC).